We begin with the raw amino-acid sequence, 364 residues long: 1-aminocyclopropane-1-carboxylate oxidase homolog 11 (364 aa).

The region spanning 213 to 312 (KSLLMICHYY…RISVASFFSS (100 aa)) is the Fe2OG dioxygenase domain. 3 residues coordinate Fe cation: His237, Asp239, and His293. A 2-oxoglutarate-binding site is contributed by Arg303.

Belongs to the iron/ascorbate-dependent oxidoreductase family. The cofactor is Fe(2+).

The protein is 1-aminocyclopropane-1-carboxylate oxidase homolog 11 of Arabidopsis thaliana (Mouse-ear cress).